The sequence spans 303 residues: Ribonucleoside-diphosphate reductase small subunit (303 aa).

Fe cation-binding residues include Asp-60, Glu-90, and His-93. Tyr-97 is a catalytic residue. Residues 147–167 (LLMILIEGIFFASSFASISYL) form a helical membrane-spanning segment. Glu-153, Glu-187, and His-190 together coordinate Fe cation.

It belongs to the ribonucleoside diphosphate reductase small chain family. Heterotetramer composed of a homodimer of the large subunit (R1) and a homodimer of the small subunit (R2). Larger multisubunit protein complex are also active, composed of (R1)n(R2)n. Requires Fe cation as cofactor.

It localises to the host membrane. It catalyses the reaction a 2'-deoxyribonucleoside 5'-diphosphate + [thioredoxin]-disulfide + H2O = a ribonucleoside 5'-diphosphate + [thioredoxin]-dithiol. In terms of biological role, ribonucleoside-diphosphate reductase holoenzyme provides the precursors necessary for viral DNA synthesis. Allows virus growth in non-dividing cells, as well as reactivation from latency in infected hosts. Catalyzes the biosynthesis of deoxyribonucleotides from the corresponding ribonucleotides. The protein is Ribonucleoside-diphosphate reductase small subunit of Suid herpesvirus 1 (strain Kaplan) (SuHV-1).